The chain runs to 156 residues: Ribosomal RNA large subunit methyltransferase H (156 aa).

S-adenosyl-L-methionine contacts are provided by residues leucine 73, glycine 104, and leucine 123–leucine 128.

This sequence belongs to the RNA methyltransferase RlmH family. In terms of assembly, homodimer.

It localises to the cytoplasm. The catalysed reaction is pseudouridine(1915) in 23S rRNA + S-adenosyl-L-methionine = N(3)-methylpseudouridine(1915) in 23S rRNA + S-adenosyl-L-homocysteine + H(+). In terms of biological role, specifically methylates the pseudouridine at position 1915 (m3Psi1915) in 23S rRNA. The protein is Ribosomal RNA large subunit methyltransferase H of Photobacterium profundum (strain SS9).